Consider the following 1013-residue polypeptide: MPPPAEVTDPSHAPAVLRQLNEQRLRGLFCDVTLIAGDTKFPAHRSVLAASSPFFREALLTSAPLPLPPATGGAAPNPATTTAASSSSSSSSSSSSSSSSASSSSSSSSSSPPPASPPASSPPRVLELPGVPAAAFSDVLNFIYSARLALPGGGGDGAAVAEIGALGRRLGISRLQGLGEGGDAWVPPTPAPMATSQPEEDSFGPGPRPAGEWEGDRAEAQAPDLQCSLPRRPLPCPQCGKSFIHPKRLQTHEAQCRRGASTRGSTGLGAGGAGPGGPAGVDASALPPPVGFRGGPEHVVKVVGGHVLYVCAACERSYVTLSSLKRHSNVHSWRRKYPCRYCEKVFALAEYRTKHEVWHTGERRYQCIFCWETFVTYYNLKTHQRAFHGISPGLLASEKTPNGGYKPKLNTLKLYRLLPMRAAKRPYKTYSQGAPEAPLSPTLNTPAPVAMPASPPPGPPPAPEPGPPPSVITFAHPAPSVIVHGGSSSGGGGSGTASTGGSQAASVITYTAPPRPPKKREYPPPPPEPAATPTSPATAVSPATAAGPAMATTTEEAKGRNPRAGRTLTYTAKPVGGIGGGGGPPTGAGRGPSQLQAPPPLCQITVRIGEEAIVKRRISETDLRPGELSGEEMEESEEDEEEEDEEEEEEDEEESKAGGEDQLWRPYYSYKPKRKAGAAGGASVGGSGLPRGRRPPRWRQKLERRSWEETPAAESPAGRARTERRHRCGDCAQTFTTLRKLRKHQEAHGGGSHSSRAGRRPSTRFTCPHCAKVCKTAAALSRHGQRHAAERPGGTPTPVIAYSKGSAGTRPGDVKEEAPQEMQVSSSSGEAGGGSTAAEEASETASLQDPIISGGEEPPVVASGGSYVYPPVQEFPLALIGGGREPGGGRGKSGSEGPVGAGEGDRMEGIGAAKVTFYPEPYPLVYGPQLLAAYPYNFSNLAALPVALNMVLPDEKGAGALPFLPGVFGYAVNPQAAPPAPPTPPPPTLPPPIPPKGEGERAGVERTQKGDVG.

Residues 30 to 152 form the BTB domain; that stretch reads CDVTLIAGDT…IYSARLALPG (123 aa). A Glycyl lysine isopeptide (Lys-Gly) (interchain with G-Cter in SUMO2) cross-link involves residue K40. Residues 67-110 are compositionally biased toward low complexity; it reads LPPATGGAAPNPATTTAASSSSSSSSSSSSSSSSASSSSSSSSS. Disordered stretches follow at residues 67 to 124 and 183 to 221; these read LPPA…SPPR and DAWVPPTPAPMATSQPEEDSFGPGPRPAGEWEGDRAEAQ. Residues 111 to 121 are compositionally biased toward pro residues; that stretch reads SPPPASPPASS. Positions 186 to 348 are interaction with CBFA2T3; the sequence is VPPTPAPMAT…CRYCEKVFAL (163 aa). A C2H2-type 1; atypical zinc finger spans residues 234–256; the sequence is LPCPQCGKSFIHPKRLQTHEAQC. Positions 257–281 are disordered; sequence RRGASTRGSTGLGAGGAGPGGPAGV. The span at 266 to 279 shows a compositional bias: gly residues; that stretch reads TGLGAGGAGPGGPA. 3 C2H2-type zinc fingers span residues 309-331, 337-359, and 365-388; these read YVCAACERSYVTLSSLKRHSNVH, YPCRYCEKVFALAEYRTKHEVWH, and YQCIFCWETFVTYYNLKTHQRAFH. The residue at position 391 (S391) is a Phosphoserine. Disordered stretches follow at residues 428–765, 783–852, 883–904, and 972–1013; these read KTYS…STRF, HGQR…DPII, GREPGGGRGKSGSEGPVGAGEG, and VNPQ…GDVG. Residues 453 to 470 are compositionally biased toward pro residues; it reads ASPPPGPPPAPEPGPPPS. Low complexity-rich tracts occupy residues 496-506 and 531-554; these read TASTGGSQAAS and ATPTSPATAVSPATAAGPAMATTT. Residue K573 forms a Glycyl lysine isopeptide (Lys-Gly) (interchain with G-Cter in SUMO2) linkage. Residues 576–590 are compositionally biased toward gly residues; it reads GGIGGGGGPPTGAGR. A compositionally biased stretch (basic and acidic residues) spans 608–625; sequence IGEEAIVKRRISETDLRP. K615 is covalently cross-linked (Glycyl lysine isopeptide (Lys-Gly) (interchain with G-Cter in SUMO2)). A coiled-coil region spans residues 627–663; sequence ELSGEEMEESEEDEEEEDEEEEEEDEEESKAGGEDQL. Residues 629–654 show a composition bias toward acidic residues; that stretch reads SGEEMEESEEDEEEEDEEEEEEDEEE. Gly residues predominate over residues 678–689; it reads AAGGASVGGSGL. 2 consecutive C2H2-type zinc fingers follow at residues 726–748 and 765–787; these read HRCGDCAQTFTTLRKLRKHQEAH and FTCPHCAKVCKTAAALSRHGQRH. A phosphothreonine; by HIPK2 mark is found at T795 and T797. Over residues 836-846 the composition is skewed to low complexity; sequence TAAEEASETAS. The segment covering 883-902 has biased composition (gly residues); it reads GREPGGGRGKSGSEGPVGAG. Pro residues predominate over residues 976 to 995; the sequence is AAPPAPPTPPPPTLPPPIPP. T983 is modified (phosphothreonine; by HIPK2). Residues 997-1013 show a composition bias toward basic and acidic residues; sequence GEGERAGVERTQKGDVG.

In terms of assembly, interacts with HIPK2. Interacts with CBFA2T3. Interacts with ZBTB38. Phosphorylated by HIPK2. This phosphorylation reduces stability and triggers ZBTB4 protein degradation in response to DNA damage.

The protein localises to the nucleus. Its subcellular location is the chromosome. Functionally, transcriptional repressor with bimodal DNA-binding specificity. Represses transcription in a methyl-CpG-dependent manner. Binds with a higher affinity to methylated CpG dinucleotides in the consensus sequence 5'-CGCG-3' but can also bind to the non-methylated consensus sequence 5'-CTGCNA-3' also known as the consensus kaiso binding site (KBS). Can also bind specifically to a single methyl-CpG pair and can bind hemimethylated DNA but with a lower affinity compared to methylated DNA. Plays a role in postnatal myogenesis, may be involved in the regulation of satellite cells self-renewal. In Homo sapiens (Human), this protein is Zinc finger and BTB domain-containing protein 4 (ZBTB4).